We begin with the raw amino-acid sequence, 578 residues long: MDNLALCEANNVPLTPITFLKRASECYPNRTSIIYGKTRFTWPQTYDRCCRLAASLISLNIGKNDVVSVVAPNTPAMYEMHFAVPMAGAVLNPINTRLDATSIAAILRHAKPKILFIYRSFEPLAREILQLLSSEDSNLNLPVIFIHEIDFPKRVSSEESDYECLIQRGEPTPLLLARMFCIQDEHDPISLNYTSGTTADPKGVVISHRGAYLSTLSAIIGWEMGTCPVYLWTLPMFHCNGWTFTWGTAARGGTSVCMRHVTAPEIYKNIEMHNVTHMCCVPTVFNILLKGNSLDLSHRSGPVHVLTGGSPPPAALVKKVQRLGFQVMHAYGLTEATGPVLFCEWQDEWNRLPENQQMELKARQGLSILGLTEVDVRNKETQESVPRDGKTMGEIVMKGSSIMKGYLKNPKATYEAFKHGWLNSGDVGVIHPDGHVEIKDRSKDIIISGGENISSVEVENIIYKYPKVLETAVVAMPHPTWGETPCAFVVLEKGETNNEDREDKLVTKERDLIEYCRENLPHFMCPRKVVFLDELPKNGNGKILKPKLRDIAKGLVAEDEVNVRSKVQRPVEHFTSRL.

Residues 576 to 578 (SRL) carry the Microbody targeting signal motif.

Belongs to the ATP-dependent AMP-binding enzyme family. In terms of tissue distribution, expressed at low levels in leaves.

It localises to the peroxisome. In terms of biological role, may act as an acid--thiol ligase that activates carboxylic acids by forming acyl-CoAs. The protein is Probable acyl-activating enzyme 12, peroxisomal (AAE12) of Arabidopsis thaliana (Mouse-ear cress).